The chain runs to 380 residues: tRNA-specific 2-thiouridylase MnmA (380 aa).

ATP is bound by residues 9 to 16 (GVSGGVDS) and Met35. The interval 94–96 (NPD) is interaction with target base in tRNA. Cys99 (nucleophile) is an active-site residue. The cysteines at positions 99 and 195 are disulfide-linked. Gly123 provides a ligand contact to ATP. The interval 145 to 147 (KDQ) is interaction with tRNA. Residue Cys195 is the Cysteine persulfide intermediate of the active site. An interaction with tRNA region spans residues 308–309 (RY).

The protein belongs to the MnmA/TRMU family.

It localises to the cytoplasm. The catalysed reaction is S-sulfanyl-L-cysteinyl-[protein] + uridine(34) in tRNA + AH2 + ATP = 2-thiouridine(34) in tRNA + L-cysteinyl-[protein] + A + AMP + diphosphate + H(+). Catalyzes the 2-thiolation of uridine at the wobble position (U34) of tRNA, leading to the formation of s(2)U34. The sequence is that of tRNA-specific 2-thiouridylase MnmA from Stenotrophomonas maltophilia (strain R551-3).